The following is a 186-amino-acid chain: EF-hand protein 5 (186 aa).

The disordered stretch occupies residues 1–23 (MSRSKEVSPNLSQQKRGDVRSAG). EF-hand domains lie at 41–76 (SAELQEGYRILTGGQKANIISDKDLFKAIHSCGLHT), 77–112 (SEEEVNDLLRVVHQDERTLGLEFPEFMMLMTKGIDE), 113–148 (ASIAEMRRPFSVLDKAKTGVITKKQFTELFVSSGEH), and 149–186 (SSAEELEELMLLAETSEELEVVDYNKLINELAILLNKM). Ca(2+)-binding residues include Glu98, Asp126, and Thr130.

The sequence is that of EF-hand protein 5 from Leishmania tarentolae (Sauroleishmania tarentolae).